The sequence spans 401 residues: UPF0242 protein CPn_0755/CP_1117/CPj0755/CpB0783 (401 aa).

This sequence belongs to the UPF0242 family.

This chain is UPF0242 protein CPn_0755/CP_1117/CPj0755/CpB0783, found in Chlamydia pneumoniae (Chlamydophila pneumoniae).